A 422-amino-acid polypeptide reads, in one-letter code: Cysteate synthase (422 aa).

Lys105 bears the N6-(pyridoxal phosphate)lysine mark. Residues Asn131 and Thr379 each coordinate pyridoxal 5'-phosphate.

Belongs to the threonine synthase family. Cysteate synthase subfamily. Homotrimer. The cofactor is pyridoxal 5'-phosphate.

The catalysed reaction is O-phospho-L-serine + sulfite + H(+) = L-cysteate + phosphate. The protein operates within cofactor biosynthesis; coenzyme M biosynthesis. Functionally, specifically catalyzes the beta-elimination of phosphate from L-phosphoserine and the beta-addition of sulfite to the dehydroalanine intermediate to produce L-cysteate. This Methanospirillum hungatei JF-1 (strain ATCC 27890 / DSM 864 / NBRC 100397 / JF-1) protein is Cysteate synthase.